We begin with the raw amino-acid sequence, 297 residues long: Dehydrodolichyl diphosphate synthase complex subunit Nus1 (297 aa).

Helical transmembrane passes span 7–26 (LVWR…TSWL) and 40–56 (CCRA…GFTL). Positions 63-73 (GRNRRHHRHPH) are enriched in basic residues. The interval 63–86 (GRNRRHHRHPHGGPGPGPGPAATH) is disordered. Residues 121–139 (IASLVVWCMAVGISYISVY) traverse the membrane as a helical segment. N-linked (GlcNAc...) asparagine glycans are attached at residues N148 and N275. Residues 294–296 (RLG) carry the RXG motif; crucial for prenyltransferase activity motif. Residues L295 and G296 each coordinate isopentenyl diphosphate.

Belongs to the UPP synthase family. The active dehydrodolichyl diphosphate synthase complex is a heterotetramer composed of a dimer of heterodimer of DHDDS and NUS1. Interacts with NPC2. The cofactor is Mg(2+). Highly expressed in heart, liver, kidney and pancreas.

The protein localises to the endoplasmic reticulum membrane. The catalysed reaction is n isopentenyl diphosphate + (2E,6E)-farnesyl diphosphate = a di-trans,poly-cis-polyprenyl diphosphate + n diphosphate. It functions in the pathway protein modification; protein glycosylation. It participates in lipid metabolism. In terms of biological role, with DHDDS, forms the dehydrodolichyl diphosphate synthase (DDS) complex, an essential component of the dolichol monophosphate (Dol-P) biosynthetic machinery. Both subunits contribute to enzymatic activity, i.e. condensation of multiple copies of isopentenyl pyrophosphate (IPP) to farnesyl pyrophosphate (FPP) to produce dehydrodolichyl diphosphate (Dedol-PP), a precursor of dolichol phosphate which is utilized as a sugar carrier in protein glycosylation in the endoplasmic reticulum (ER). Synthesizes long-chain polyprenols, mostly of C95 and C100 chain length. Regulates the glycosylation and stability of nascent NPC2, thereby promoting trafficking of LDL-derived cholesterol. Acts as a specific receptor for the N-terminus of Nogo-B, a neural and cardiovascular regulator. The protein is Dehydrodolichyl diphosphate synthase complex subunit Nus1 of Mus musculus (Mouse).